We begin with the raw amino-acid sequence, 375 residues long: Putative glycyl-radical enzyme activating enzyme MJ0021 (375 aa).

The Radical SAM core domain maps to 23 to 246 (QCVKGGKLVL…LKVIKEFKGD (224 aa)). [4Fe-4S] cluster is bound by residues Cys38, Cys42, and Cys45. Residues 44–46 (YCP) and Gly87 contribute to the S-adenosyl-L-methionine site.

Belongs to the organic radical-activating enzymes family. It depends on [4Fe-4S] cluster as a cofactor.

The catalysed reaction is glycyl-[protein] + reduced [flavodoxin] + S-adenosyl-L-methionine = glycin-2-yl radical-[protein] + semiquinone [flavodoxin] + 5'-deoxyadenosine + L-methionine + H(+). The polypeptide is Putative glycyl-radical enzyme activating enzyme MJ0021 (Methanocaldococcus jannaschii (strain ATCC 43067 / DSM 2661 / JAL-1 / JCM 10045 / NBRC 100440) (Methanococcus jannaschii)).